The sequence spans 255 residues: Pimeloyl-[acyl-carrier protein] methyl ester esterase (255 aa).

The AB hydrolase-1 domain maps to 16–242 (LVLLHGWGLN…AAHAPFISHP (227 aa)). Residues Trp-22, 82–83 (SL), and 143–147 (FLALQ) each bind substrate. Catalysis depends on Ser-82, which acts as the Nucleophile. Active-site residues include Asp-207 and His-235. His-235 lines the substrate pocket.

Belongs to the AB hydrolase superfamily. Carboxylesterase BioH family. Monomer.

It localises to the cytoplasm. The enzyme catalyses 6-carboxyhexanoyl-[ACP] methyl ester + H2O = 6-carboxyhexanoyl-[ACP] + methanol + H(+). The protein operates within cofactor biosynthesis; biotin biosynthesis. Functionally, the physiological role of BioH is to remove the methyl group introduced by BioC when the pimeloyl moiety is complete. It allows to synthesize pimeloyl-ACP via the fatty acid synthetic pathway through the hydrolysis of the ester bonds of pimeloyl-ACP esters. The sequence is that of Pimeloyl-[acyl-carrier protein] methyl ester esterase from Pectobacterium carotovorum subsp. carotovorum (strain PC1).